An 85-amino-acid chain; its full sequence is Alpha-toxin Amm8 (85 aa).

Positions 1–19 (MNYLVMISLALLFMTGVES) are cleaved as a signal peptide. An LCN-type CS-alpha/beta domain is found at 21–83 (KDGYIVNDIN…VRTKGPGRCN (63 aa)). Cystine bridges form between C31–C82, C35–C55, C41–C65, and C45–C67. A propeptide (removed by a carboxypeptidase) is located at residue R85.

Belongs to the long (4 C-C) scorpion toxin superfamily. Sodium channel inhibitor family. Alpha subfamily. Expressed by the venom gland.

Its subcellular location is the secreted. Alpha toxins bind voltage-independently at site-3 of sodium channels (Nav) and inhibit the inactivation of the activated channels, thereby blocking neuronal transmission. The toxin principally slows the inactivation process of TTX-sensitive sodium channels. It discriminates neuronal versus muscular sodium channel, as it is more potent on rat brain Nav1.2/SCN2A (EC(50)=29 nM) than on rat skeletal muscle Nav1.4/SCN4A (EC(50)=416 nM). It also shows a weak activity on Nav1.7/SCN9A (EC(50)=1.76 uM). In vivo, the toxin produces pain hypersensibility to mechanical and thermal stimuli. It also exhibits potent analgesic activity (when injected intraperitoneally), increasing hot plate and tail flick withdrawal latencies in a dose-dependent fashion. This paradoxical analgesic action, is significantly suppressed by opioid receptor antagonists, suggesting a pain-induced analgesia mechanism that involves an endogenous opioid system. This led to hypothesis that pain relief induced by peripheral administration of Amm VIII may result from sensitization of primary afferent neurons and subsequent activation of an opioid-dependent noxious inhibitory control. The chain is Alpha-toxin Amm8 from Androctonus mauritanicus mauritanicus (Scorpion).